Reading from the N-terminus, the 722-residue chain is Dipeptidyl aminopeptidase BII (722 aa).

An N-terminal signal peptide occupies residues 1–24; it reads MRPNLLAAAIAVPLSLLAAQIAQA. Cystine bridges form between Cys-70–Cys-87 and Cys-166–Cys-174. His-86 functions as the Charge relay system in the catalytic mechanism. 215–216 contributes to the substrate binding site; sequence NW. Catalysis depends on Asp-224, which acts as the Charge relay system. Substrate contacts are provided by residues Asn-330, 655–657, and 673–674; these read GNS and FD. The Charge relay system role is filled by Ser-657.

This sequence belongs to the peptidase S46 family. Homodimer.

With respect to regulation, completely inhibited by the serine protease inhibitor diisopropyl fluorophosphate (DFP) and potently inhibited by 0.5 mM ZnCl(2), 10 mM o-phenanthlorine, phenylmethanesulfonyl fluoride (PMSF) and N-tosyl-L-phenyl-alanyl chloromethyl ketone (TPCK), but not by N-tosyl-L-lysyl chloromethyl ketone (TLCK). Activity is not affected significantly by protease inhibitors, such as chymostatin, leupeptin, N-ethylmaleimide (NEM), iodoacetate (IAA), L-trans-epoxysuccinyl-leucylamido(4-guanido)butane (E64) and pepstatin A or by CoCl(2), CaCl(2) and EDTA. In terms of biological role, exopeptidase that catalyzes the removal of dipeptide units (NH2-P2-P1-) from the free amino termini of oligopeptides and small proteins. Peptide digestion is sequential and substrate recognition is non-specific, with the exception that Pro is not suitable as a P1 residue. Removes many residues of bioactive oligopeptides such as angiotensin I and neuromedin N and also cleaves oxidized insulin B chain. Able to hydrolyze an X-Pro bond, an imido bond. No endopeptidase activity. May play a physiological role in feeding. The polypeptide is Dipeptidyl aminopeptidase BII (Pseudoxanthomonas mexicana).